We begin with the raw amino-acid sequence, 192 residues long: Adenylate kinase (192 aa).

An ATP-binding site is contributed by 11–16; that stretch reads GSGKGT. Residues 31–60 form an NMP region; it reads STGDIFRANVKGETPLGIEAKKYMDNGDFV. AMP is bound by residues threonine 32, arginine 37, 58–60, 86–89, and glutamine 93; these read DFV and GYPR. The segment at 127–137 is LID; the sequence is GRAKETGRSDD. Arginine 128 is an ATP binding site. 2 residues coordinate AMP: arginine 134 and arginine 145. Residue glycine 173 participates in ATP binding.

The protein belongs to the adenylate kinase family. In terms of assembly, monomer.

The protein resides in the cytoplasm. The enzyme catalyses AMP + ATP = 2 ADP. It functions in the pathway purine metabolism; AMP biosynthesis via salvage pathway; AMP from ADP: step 1/1. Catalyzes the reversible transfer of the terminal phosphate group between ATP and AMP. Plays an important role in cellular energy homeostasis and in adenine nucleotide metabolism. The polypeptide is Adenylate kinase (Pseudarthrobacter chlorophenolicus (strain ATCC 700700 / DSM 12829 / CIP 107037 / JCM 12360 / KCTC 9906 / NCIMB 13794 / A6) (Arthrobacter chlorophenolicus)).